Consider the following 486-residue polypeptide: Cysteine--tRNA ligase (486 aa).

Cys30 contributes to the Zn(2+) binding site. Residues 32–42 carry the 'HIGH' region motif; the sequence is PTVYDRAHLGN. Residues Cys221, His246, and Glu250 each coordinate Zn(2+). A 'KMSKS' region motif is present at residues 279–283; that stretch reads KMSKS. Residue Lys282 participates in ATP binding.

It belongs to the class-I aminoacyl-tRNA synthetase family. As to quaternary structure, monomer. Requires Zn(2+) as cofactor.

Its subcellular location is the cytoplasm. The catalysed reaction is tRNA(Cys) + L-cysteine + ATP = L-cysteinyl-tRNA(Cys) + AMP + diphosphate. The polypeptide is Cysteine--tRNA ligase (Cereibacter sphaeroides (strain ATCC 17029 / ATH 2.4.9) (Rhodobacter sphaeroides)).